Reading from the N-terminus, the 80-residue chain is UPF0291 protein LACR_1198 (80 aa).

The protein belongs to the UPF0291 family.

Its subcellular location is the cytoplasm. This chain is UPF0291 protein LACR_1198, found in Lactococcus lactis subsp. cremoris (strain SK11).